Reading from the N-terminus, the 472-residue chain is Peptidoglycan endopeptidase RipA (472 aa).

A signal peptide (tat-type signal) is located at residues 1–39 (MRRNRRGSPARPAARFVRPAIPSALSVALLVCTPGLATA). A NlpC/P60 domain is found at 340–472 (RQASEYVIRR…TPYVVRYIEY (133 aa)). Cys383 functions as the Nucleophile in the catalytic mechanism. His432 serves as the catalytic Proton acceptor. The active site involves Glu444.

It belongs to the peptidase C40 family. As to quaternary structure, monomer. Interacts with RpfB and PBP1A (ponA1) via residues 448-472 of RipA, interacts with RpfE. Interacts with the chaperone MoxR1. RipA-MoxR1 interaction in the cytoplasm leads to proper folding of RipA, resulting in its secretion. Also interacts with Mce2B. Exported by the Tat system. The position of the signal peptide cleavage has not been experimentally proven.

The protein localises to the secreted. With respect to regulation, moxR1-mediated folding is critical for secretion via the TAT system. The synergistic effects on peptidoglycan degradation of RipA plus RpfB are inhibited by addition of PBP1A (ponA1). Peptidoglycan endopeptidase that cleaves the bond between D-glutamate and meso-diaminopimelate. Binds and degrades high-molecular weight peptidoglycan from a number of Actinobacteria; activity is increased in the presence of RpfB and inhibited by PBP1A (ponA1). Required for normal separation of daughter cells after cell division and for cell wall integrity. Required for host cell invasion and intracellular survival in host macrophages. The polypeptide is Peptidoglycan endopeptidase RipA (ripA) (Mycobacterium tuberculosis (strain ATCC 25618 / H37Rv)).